The sequence spans 294 residues: N-acetylmuramic acid 6-phosphate etherase (294 aa).

Residues 56–219 enclose the SIS domain; it reads TSYSLRNGGR…STLSMVSVGK (164 aa). The active-site Proton donor is E84. E115 is a catalytic residue.

Belongs to the GCKR-like family. MurNAc-6-P etherase subfamily. As to quaternary structure, homodimer.

It carries out the reaction N-acetyl-D-muramate 6-phosphate + H2O = N-acetyl-D-glucosamine 6-phosphate + (R)-lactate. Its pathway is amino-sugar metabolism; 1,6-anhydro-N-acetylmuramate degradation. It functions in the pathway amino-sugar metabolism; N-acetylmuramate degradation. It participates in cell wall biogenesis; peptidoglycan recycling. Functionally, specifically catalyzes the cleavage of the D-lactyl ether substituent of MurNAc 6-phosphate, producing GlcNAc 6-phosphate and D-lactate. Together with AnmK, is also required for the utilization of anhydro-N-acetylmuramic acid (anhMurNAc) either imported from the medium or derived from its own cell wall murein, and thus plays a role in cell wall recycling. The sequence is that of N-acetylmuramic acid 6-phosphate etherase from Francisella tularensis subsp. holarctica (strain LVS).